Consider the following 208-residue polypeptide: ATP-dependent Clp protease proteolytic subunit (208 aa).

S106 acts as the Nucleophile in catalysis. H131 is an active-site residue.

Belongs to the peptidase S14 family. In terms of assembly, fourteen ClpP subunits assemble into 2 heptameric rings which stack back to back to give a disk-like structure with a central cavity, resembling the structure of eukaryotic proteasomes.

It is found in the cytoplasm. The catalysed reaction is Hydrolysis of proteins to small peptides in the presence of ATP and magnesium. alpha-casein is the usual test substrate. In the absence of ATP, only oligopeptides shorter than five residues are hydrolyzed (such as succinyl-Leu-Tyr-|-NHMec, and Leu-Tyr-Leu-|-Tyr-Trp, in which cleavage of the -Tyr-|-Leu- and -Tyr-|-Trp bonds also occurs).. Its function is as follows. Cleaves peptides in various proteins in a process that requires ATP hydrolysis. Has a chymotrypsin-like activity. Plays a major role in the degradation of misfolded proteins. This Dinoroseobacter shibae (strain DSM 16493 / NCIMB 14021 / DFL 12) protein is ATP-dependent Clp protease proteolytic subunit.